The sequence spans 400 residues: 3-phenylpropionate/cinnamic acid dioxygenase ferredoxin--NAD(+) reductase component (400 aa).

5 to 36 contacts FAD; it reads TIIIVGGGQAAAMAAASLRQQGFTGELHLFSD. 146–174 is an NAD(+) binding site; sequence SVVIVGAGTIGLELAASATQRGCKVTVIE.

The protein belongs to the bacterial ring-hydroxylating dioxygenase ferredoxin reductase family. As to quaternary structure, this dioxygenase system consists of four proteins: the two subunits of the hydroxylase component (HcaE and HcaF), a ferredoxin (HcaC) and a ferredoxin reductase (HcaD). It depends on FAD as a cofactor.

It catalyses the reaction 2 reduced [2Fe-2S]-[ferredoxin] + NAD(+) + H(+) = 2 oxidized [2Fe-2S]-[ferredoxin] + NADH. It participates in aromatic compound metabolism; 3-phenylpropanoate degradation. In terms of biological role, part of the multicomponent 3-phenylpropionate dioxygenase, that converts 3-phenylpropionic acid (PP) and cinnamic acid (CI) into 3-phenylpropionate-dihydrodiol (PP-dihydrodiol) and cinnamic acid-dihydrodiol (CI-dihydrodiol), respectively. In Escherichia coli O17:K52:H18 (strain UMN026 / ExPEC), this protein is 3-phenylpropionate/cinnamic acid dioxygenase ferredoxin--NAD(+) reductase component.